Consider the following 536-residue polypeptide: Major facilitator superfamily domain-containing protein 4B (536 aa).

12 consecutive transmembrane segments (helical) span residues 19 to 39, 53 to 73, 81 to 101, 105 to 125, 140 to 160, 211 to 231, 297 to 317, 341 to 361, 366 to 386, 391 to 411, 428 to 448, and 456 to 476; these read LTYWSVFFSFGLSIAFLGPTI, ITWVFFAQQLCLLIGSSSGGA, ALLALFLSSLIISVVFSIIPL, VLLLAIAMAVSGLAMGIIDTI, IFLQALHFFIGLGALLSPLIA, YAFWIMALINLPVPIAVFVLM, FFLIHIFGGMVLFMTEGIMGV, LNCIFWAAITAGRLVSIPLSY, VHLLLTNMAGVIVTLLLLMIL, VFLFVGTTFLGLFISSVFPCL, VLVTLSGMGEMTLQVLAGTLI, and FLVCGLVIGCLGFIFLLSVIL.

The protein belongs to the major facilitator superfamily.

Its subcellular location is the membrane. The protein is Major facilitator superfamily domain-containing protein 4B of Danio rerio (Zebrafish).